A 55-amino-acid chain; its full sequence is Large ribosomal subunit protein bL33 (55 aa).

Residues 1 to 11 show a composition bias toward basic and acidic residues; sequence MAKGGREKIKL. Residues 1-27 form a disordered region; it reads MAKGGREKIKLESTAGTGHFYTTSKNK. Positions 14–24 are enriched in polar residues; the sequence is TAGTGHFYTTS.

This sequence belongs to the bacterial ribosomal protein bL33 family.

This Dechloromonas aromatica (strain RCB) protein is Large ribosomal subunit protein bL33.